The following is a 470-amino-acid chain: Acetyl-CoA decarbonylase/synthase complex subunit gamma 2 (470 aa).

The 4Fe-4S domain occupies 1–60 (MKINSPLEAYKYLPQTNCGECGQPTCMAFASTLIDRSGKTTDCPPLIKEKKFAKKLAELD). [4Fe-4S] cluster-binding residues include Cys-18, Cys-21, Cys-26, and Cys-43.

As to quaternary structure, heterodimer of delta and gamma chains. The ACDS complex is made up of alpha, epsilon, beta, gamma and delta chains with a probable stoichiometry of (alpha(2)epsilon(2))(4)-beta(8)-(gamma(1)delta(1))(8). Corrinoid is required as a cofactor. [4Fe-4S] cluster serves as cofactor.

It carries out the reaction 5,6,7,8-tetrahydrosarcinapterin + methyl-Co(III)-[corrinoid Fe-S protein] = 5-methyltetrahydrosarcinapterin + Co(I)-[corrinoid Fe-S protein] + H(+). The protein operates within one-carbon metabolism; methanogenesis from acetate. Its function is as follows. Part of a complex that catalyzes the reversible cleavage of acetyl-CoA, allowing growth on acetate as sole source of carbon and energy. The chain is Acetyl-CoA decarbonylase/synthase complex subunit gamma 2 from Methanosarcina mazei (strain ATCC BAA-159 / DSM 3647 / Goe1 / Go1 / JCM 11833 / OCM 88) (Methanosarcina frisia).